The following is a 395-amino-acid chain: MRDKGEYLFTSESVSEGHPDKVADRISDTVLDAFLKADPYARVACETLVTTNRVVLAGETRGPASVTPELLENLTREAIKDIGYDQEGFSWKNADVAIHLHAQSADIAVGVDSTGNKDEGAGDQGIMFGYACRETPALMPAPIYYSHEILRRLTELRKSGSTEGKLLEPDAKSQVTLRYVDGRPVGATSVVVSTQHGEAASQDELRRIVTGVIGQVLPDGWMPPEQEIYVNPTGKFVIGGPDGDAGLTGRKIIVDTYGGAAPHGGGAFSGKDPTKVDRSAAYVARYLAKNVVAAELADRVTLQISYAIGVSHPLSVYVDLHGTGHDVDEVKLEKTLRELVNLSPRGIREHLRLNRPIYVPTSAYGHFGRTPDMALDNFTWEQTDIAAALRSAFNR.

Position 18 (histidine 18) interacts with ATP. A Mg(2+)-binding site is contributed by aspartate 20. Residue glutamate 46 participates in K(+) binding. 2 residues coordinate L-methionine: glutamate 59 and glutamine 103. The interval 103–113 (QSADIAVGVDS) is flexible loop. ATP-binding positions include 170–172 (DAK), 235–236 (KF), aspartate 244, 250–251 (RK), alanine 267, and lysine 271. Aspartate 244 is a binding site for L-methionine. Residue lysine 275 coordinates L-methionine.

It belongs to the AdoMet synthase family. In terms of assembly, homotetramer; dimer of dimers. It depends on Mg(2+) as a cofactor. Requires K(+) as cofactor.

The protein localises to the cytoplasm. It carries out the reaction L-methionine + ATP + H2O = S-adenosyl-L-methionine + phosphate + diphosphate. It functions in the pathway amino-acid biosynthesis; S-adenosyl-L-methionine biosynthesis; S-adenosyl-L-methionine from L-methionine: step 1/1. Functionally, catalyzes the formation of S-adenosylmethionine (AdoMet) from methionine and ATP. The overall synthetic reaction is composed of two sequential steps, AdoMet formation and the subsequent tripolyphosphate hydrolysis which occurs prior to release of AdoMet from the enzyme. In Granulibacter bethesdensis (strain ATCC BAA-1260 / CGDNIH1), this protein is S-adenosylmethionine synthase.